We begin with the raw amino-acid sequence, 455 residues long: MHILVVGVDYKSAPIEIREKVSFQPNELAEAMVQLKEEKSILENIIVSTCNRTEIYAVVDQLHTGRYYIKKFLADWFQLSKEELSPFLTFYESDAAVEHLFRVACGLDSMVIGETQILGQVRDSFKTAQQEKTIGTIFNELFKQAVTVGKRTHAETDIGSNAVSVSYAAVELAKKIFGNLSSKHILILGAGKMGELAAENLHGQGIGKVTVINRTYLKAKELADRFSGEARSLNQLESALAEADILISSTGASEFVVSKEMMENANKLRKGRPLFMVDIAVPRDLDPALNDLEGVFLYDIDDLEGIVEANMKERRETAEKVELLIEETIVEFKQWMNTLGVVPVISALREKALAIQSETMDSIERKLPHLSTREKKLLNKHTKSIINQMLRDPILKVKELAADADSEEKLALFMQIFDIEEAAGRQMMKTVESSQKVHSFKKAESKAGFSPLVSE.

Substrate-binding positions include 49-52, Ser-109, 114-116, and Gln-120; these read TCNR and ETQ. Catalysis depends on Cys-50, which acts as the Nucleophile. Position 189 to 194 (189 to 194) interacts with NADP(+); that stretch reads GAGKMG.

This sequence belongs to the glutamyl-tRNA reductase family. As to quaternary structure, homodimer.

The enzyme catalyses (S)-4-amino-5-oxopentanoate + tRNA(Glu) + NADP(+) = L-glutamyl-tRNA(Glu) + NADPH + H(+). Its pathway is porphyrin-containing compound metabolism; protoporphyrin-IX biosynthesis; 5-aminolevulinate from L-glutamyl-tRNA(Glu): step 1/2. Its function is as follows. Catalyzes the NADPH-dependent reduction of glutamyl-tRNA(Glu) to glutamate 1-semialdehyde (GSA). This is Glutamyl-tRNA reductase from Bacillus subtilis (strain 168).